The chain runs to 89 residues: Long neurotoxin homolog Pa ID (89 aa).

An N-terminal signal peptide occupies residues 1 to 21 (MKTLLLTLVVVTIMCLDLGYT). Intrachain disulfides connect Cys-24–Cys-42, Cys-35–Cys-63, Cys-48–Cys-52, Cys-67–Cys-78, and Cys-79–Cys-84.

It belongs to the three-finger toxin family. Long-chain subfamily. Type II alpha-neurotoxin sub-subfamily. Expressed by the venom gland.

The protein resides in the secreted. Its function is as follows. Binds with high affinity to muscular (alpha-1/CHRNA1) and neuronal (alpha-7/CHRNA7) nicotinic acetylcholine receptor (nAChR) and inhibits acetylcholine from binding to the receptor, thereby impairing neuromuscular and neuronal transmission. The protein is Long neurotoxin homolog Pa ID of Pseudechis australis (Mulga snake).